Reading from the N-terminus, the 338-residue chain is Fe-S cluster assembly protein DRE2 (338 aa).

An N-terminal SAM-like domain region spans residues 1-165; the sequence is MAKSGLLLIH…LPSFKKAANK (165 aa). The segment at 166 to 232 is linker; it reads PLPTFKKKVE…DDLLNEEDAK (67 aa). The interval 181 to 223 is disordered; that stretch reads VEARVHKAENDDDELEDEEDENLFDASRSKYFDEDDSESLDED. 2 stretches are compositionally biased toward acidic residues: residues 190-203 and 213-223; these read NDDD…DENL and DEDDSESLDED. [2Fe-2S] cluster contacts are provided by Cys242, Cys253, Cys256, and Cys258. The segment at 242-258 is fe-S binding site A; sequence CGKSKTKKKKACKDCSC. The [4Fe-4S] cluster site is built by Cys301, Cys304, Cys312, and Cys315. 2 short sequence motifs (cx2C motif) span residues 301 to 304 and 312 to 315; these read CGSC and CTGC. Residues 301-315 form a fe-S binding site B region; that stretch reads CGSCSLGDAFRCTGC.

This sequence belongs to the anamorsin family. As to quaternary structure, monomer. Interacts with TAH18. Interacts with MIA40. It depends on [2Fe-2S] cluster as a cofactor. Requires [4Fe-4S] cluster as cofactor.

The protein resides in the cytoplasm. Its subcellular location is the mitochondrion intermembrane space. Functionally, component of the cytosolic iron-sulfur (Fe-S) protein assembly (CIA) machinery required for the maturation of extramitochondrial Fe-S proteins. Part of an electron transfer chain functioning in an early step of cytosolic Fe-S biogenesis, facilitating the de novo assembly of a [4Fe-4S] cluster on the scaffold complex CFD1-NBP35. Electrons are transferred to DRE2 from NADPH via the FAD- and FMN-containing protein TAH18. TAH18-DRE2 are also required for the assembly of the diferric tyrosyl radical cofactor of ribonucleotide reductase (RNR), probably by providing electrons for reduction during radical cofactor maturation in the catalytic small subunit RNR2. The protein is Fe-S cluster assembly protein DRE2 of Candida glabrata (strain ATCC 2001 / BCRC 20586 / JCM 3761 / NBRC 0622 / NRRL Y-65 / CBS 138) (Yeast).